Here is a 276-residue protein sequence, read N- to C-terminus: ADP-dependent (S)-NAD(P)H-hydrate dehydratase (276 aa).

The YjeF C-terminal domain occupies 7 to 275 (TEEHVRATLP…DILPRVWKRF (269 aa)). (6S)-NADPHX is bound by residues A42, G104, and H149. AMP contacts are provided by residues 186–190 (KGNQT) and G215. D216 contributes to the (6S)-NADPHX binding site.

This sequence belongs to the NnrD/CARKD family. As to quaternary structure, homotetramer. Requires Mg(2+) as cofactor.

The enzyme catalyses (6S)-NADHX + ADP = AMP + phosphate + NADH + H(+). The catalysed reaction is (6S)-NADPHX + ADP = AMP + phosphate + NADPH + H(+). Functionally, catalyzes the dehydration of the S-form of NAD(P)HX at the expense of ADP, which is converted to AMP. Together with NAD(P)HX epimerase, which catalyzes the epimerization of the S- and R-forms, the enzyme allows the repair of both epimers of NAD(P)HX, a damaged form of NAD(P)H that is a result of enzymatic or heat-dependent hydration. The sequence is that of ADP-dependent (S)-NAD(P)H-hydrate dehydratase from Bacillus subtilis (strain 168).